The chain runs to 116 residues: Methionine-R-sulfoxide reductase B1 (116 aa).

In terms of domain architecture, MsrB spans 1-106; the sequence is MSFCSFFGGE…FSSSLKFVPK (106 aa). The Zn(2+) site is built by cysteine 23, cysteine 26, cysteine 71, and cysteine 74. The active-site Nucleophile is selenocysteine 95. A non-standard amino acid (selenocysteine) is located at residue selenocysteine 95.

It belongs to the MsrB Met sulfoxide reductase family. Zn(2+) is required as a cofactor. Post-translationally, truncated MSRB1/SEPX1 proteins produced by failed UGA/Sec decoding are ubiquitinated by some Cul2-RING E3 ubiquitin-protein ligase complexes (containing either PRAME, PRAMF6, PRAMF9 or FEM1C as substrate-recognition component).

Its subcellular location is the cytoplasm. The protein localises to the nucleus. It is found in the cytoskeleton. It carries out the reaction L-methionyl-[protein] + [thioredoxin]-disulfide + H2O = L-methionyl-(R)-S-oxide-[protein] + [thioredoxin]-dithiol. The enzyme catalyses [thioredoxin]-disulfide + L-methionine + H2O = L-methionine (R)-S-oxide + [thioredoxin]-dithiol. In terms of biological role, methionine-sulfoxide reductase that specifically reduces methionine (R)-sulfoxide back to methionine. While in many cases, methionine oxidation is the result of random oxidation following oxidative stress, methionine oxidation is also a post-translational modification that takes place on specific residue. Acts as a regulator of actin assembly by reducing methionine (R)-sulfoxide mediated by MICALs (MICAL1, MICAL2 or MICAL3) on actin, thereby promoting filament repolymerization. Plays a role in innate immunity by reducing oxidized actin, leading to actin repolymerization in macrophages. The chain is Methionine-R-sulfoxide reductase B1 (MSRB1) from Homo sapiens (Human).